A 72-amino-acid polypeptide reads, in one-letter code: Translation initiation factor IF-1 (72 aa).

Positions 1–72 constitute an S1-like domain; that stretch reads MTKEDNIEMQ…TKGRIIFRSR (72 aa).

This sequence belongs to the IF-1 family. Component of the 30S ribosomal translation pre-initiation complex which assembles on the 30S ribosome in the order IF-2 and IF-3, IF-1 and N-formylmethionyl-tRNA(fMet); mRNA recruitment can occur at any time during PIC assembly.

It localises to the cytoplasm. Functionally, one of the essential components for the initiation of protein synthesis. Stabilizes the binding of IF-2 and IF-3 on the 30S subunit to which N-formylmethionyl-tRNA(fMet) subsequently binds. Helps modulate mRNA selection, yielding the 30S pre-initiation complex (PIC). Upon addition of the 50S ribosomal subunit IF-1, IF-2 and IF-3 are released leaving the mature 70S translation initiation complex. The protein is Translation initiation factor IF-1 of Buchnera aphidicola subsp. Schizaphis graminum (strain Sg).